We begin with the raw amino-acid sequence, 484 residues long: tRNA sulfurtransferase (484 aa).

The region spanning 63-167 is the THUMP domain; the sequence is KEMGERLTCM…DKRLFVIHSQ (105 aa). Residues 185-186, K267, G289, and Q298 each bind ATP; that span reads LM. A disulfide bond links C346 and C457. One can recognise a Rhodanese domain in the interval 405 to 483; the sequence is ALAGQIVIDI…GHANVRVYRP (79 aa). The active-site Cysteine persulfide intermediate is the C457.

This sequence belongs to the ThiI family.

It localises to the cytoplasm. It catalyses the reaction [ThiI sulfur-carrier protein]-S-sulfanyl-L-cysteine + a uridine in tRNA + 2 reduced [2Fe-2S]-[ferredoxin] + ATP + H(+) = [ThiI sulfur-carrier protein]-L-cysteine + a 4-thiouridine in tRNA + 2 oxidized [2Fe-2S]-[ferredoxin] + AMP + diphosphate. The catalysed reaction is [ThiS sulfur-carrier protein]-C-terminal Gly-Gly-AMP + S-sulfanyl-L-cysteinyl-[cysteine desulfurase] + AH2 = [ThiS sulfur-carrier protein]-C-terminal-Gly-aminoethanethioate + L-cysteinyl-[cysteine desulfurase] + A + AMP + 2 H(+). Its pathway is cofactor biosynthesis; thiamine diphosphate biosynthesis. In terms of biological role, catalyzes the ATP-dependent transfer of a sulfur to tRNA to produce 4-thiouridine in position 8 of tRNAs, which functions as a near-UV photosensor. Also catalyzes the transfer of sulfur to the sulfur carrier protein ThiS, forming ThiS-thiocarboxylate. This is a step in the synthesis of thiazole, in the thiamine biosynthesis pathway. The sulfur is donated as persulfide by IscS. This chain is tRNA sulfurtransferase, found in Pseudomonas fluorescens (strain Pf0-1).